A 553-amino-acid polypeptide reads, in one-letter code: Chaperonin GroEL 1 (553 aa).

Residues 29 to 32 (TIGP), 86 to 90 (DGTTT), G413, 476 to 478 (NAL), and D492 contribute to the ATP site. Residues 520-543 (DKPEPPAPAGGGGDPMGGMGGMDP) form a disordered region. Gly residues predominate over residues 528–543 (AGGGGDPMGGMGGMDP).

Belongs to the chaperonin (HSP60) family. Forms a cylinder of 14 subunits composed of two heptameric rings stacked back-to-back. Interacts with the co-chaperonin GroES.

The protein localises to the cytoplasm. The catalysed reaction is ATP + H2O + a folded polypeptide = ADP + phosphate + an unfolded polypeptide.. In terms of biological role, together with its co-chaperonin GroES, plays an essential role in assisting protein folding. The GroEL-GroES system forms a nano-cage that allows encapsulation of the non-native substrate proteins and provides a physical environment optimized to promote and accelerate protein folding. The protein is Chaperonin GroEL 1 of Synechococcus sp. (strain CC9311).